The chain runs to 322 residues: Lipoyl synthase 2 (322 aa).

The tract at residues 1–36 (MKVILDLLNNDPRTTQRTERPRHPEKANRPDTPMES) is disordered. The span at 14-34 (TTQRTERPRHPEKANRPDTPM) shows a compositional bias: basic and acidic residues. [4Fe-4S] cluster-binding residues include C67, C72, C78, C93, C97, C100, and S306. Residues 79 to 295 (WAKKHATFMI…EKTAYAKGFL (217 aa)) enclose the Radical SAM core domain.

This sequence belongs to the radical SAM superfamily. Lipoyl synthase family. [4Fe-4S] cluster serves as cofactor.

It localises to the cytoplasm. It carries out the reaction [[Fe-S] cluster scaffold protein carrying a second [4Fe-4S](2+) cluster] + N(6)-octanoyl-L-lysyl-[protein] + 2 oxidized [2Fe-2S]-[ferredoxin] + 2 S-adenosyl-L-methionine + 4 H(+) = [[Fe-S] cluster scaffold protein] + N(6)-[(R)-dihydrolipoyl]-L-lysyl-[protein] + 4 Fe(3+) + 2 hydrogen sulfide + 2 5'-deoxyadenosine + 2 L-methionine + 2 reduced [2Fe-2S]-[ferredoxin]. Its pathway is protein modification; protein lipoylation via endogenous pathway; protein N(6)-(lipoyl)lysine from octanoyl-[acyl-carrier-protein]: step 2/2. Its function is as follows. Catalyzes the radical-mediated insertion of two sulfur atoms into the C-6 and C-8 positions of the octanoyl moiety bound to the lipoyl domains of lipoate-dependent enzymes, thereby converting the octanoylated domains into lipoylated derivatives. This chain is Lipoyl synthase 2, found in Bradyrhizobium diazoefficiens (strain JCM 10833 / BCRC 13528 / IAM 13628 / NBRC 14792 / USDA 110).